A 423-amino-acid chain; its full sequence is Histidine--tRNA ligase (423 aa).

It belongs to the class-II aminoacyl-tRNA synthetase family. Homodimer.

It localises to the cytoplasm. It carries out the reaction tRNA(His) + L-histidine + ATP = L-histidyl-tRNA(His) + AMP + diphosphate + H(+). In Actinobacillus succinogenes (strain ATCC 55618 / DSM 22257 / CCUG 43843 / 130Z), this protein is Histidine--tRNA ligase.